Consider the following 129-residue polypeptide: Bacteriohemerythrin (129 aa).

The Fe cation site is built by His-19, His-59, Glu-63, His-78, His-82, His-119, and Asp-124.

Belongs to the hemerythrin family. As to quaternary structure, monomer.

Oxygen-binding protein. May be involved in a storage mechanism or for delivery to oxygen-requiring enzymes. The oxygen-binding site contains two iron atoms. The chain is Bacteriohemerythrin from Clostridium acetobutylicum (strain ATCC 824 / DSM 792 / JCM 1419 / IAM 19013 / LMG 5710 / NBRC 13948 / NRRL B-527 / VKM B-1787 / 2291 / W).